A 24-amino-acid chain; its full sequence is Neurotoxin 5 (24 aa).

Positions 2-24 constitute an LCN-type CS-alpha/beta domain; it reads RDAYIAQNYNCVYTCFKNDYCND.

It belongs to the long (4 C-C) scorpion toxin superfamily. Sodium channel inhibitor family. Alpha subfamily. As to expression, expressed by the venom gland.

The protein resides in the secreted. Functionally, binds to sodium channels (Nav) and inhibits the inactivation of the activated channels, thereby blocking neuronal transmission. This chain is Neurotoxin 5, found in Buthus occitanus tunetanus (Common European scorpion).